We begin with the raw amino-acid sequence, 543 residues long: Excitatory amino acid transporter 1 (543 aa).

Topologically, residues 1–47 are cytoplasmic; the sequence is MTKSNGEEPRMGGRMERLQQGVRKRTLLAKKKVQSLTKEDVKSYLFR. The helical transmembrane segment at 48–68 threads the bilayer; it reads NAFVLLTVTAVIVGTILGFAL. Residues 69–86 are Extracellular-facing; that stretch reads RPYKMSYREVKYFSFPGE. Residues 87–108 form a helical membrane-spanning segment; it reads LLMRMLQMLVLPLIISSLVTGM. Over 109–122 the chain is Cytoplasmic; that stretch reads AALDSKASGKMGMR. A helical membrane pass occupies residues 123–145; it reads AVVYYMTTTIIAVVIGIIIVIII. Residues 146-236 lie on the Extracellular side of the membrane; that stretch reads HPGKGTKENM…IREEMVPVPG (91 aa). N-linked (GlcNAc...) asparagine glycosylation is found at asparagine 206 and asparagine 216. The helical transmembrane segment at 237 to 260 threads the bilayer; that stretch reads SVNGVNALGLVVFSMCFGFVIGNM. Over 261–269 the chain is Cytoplasmic; sequence KEQGQALRE. The helical transmembrane segment at 270–297 threads the bilayer; sequence FFDSLNEAIMRLVAVIMWYAPLGILFLI. Residues 298–318 lie on the Extracellular side of the membrane; the sequence is AGKIVEMEDMGVIGGQLAMYT. A helical transmembrane segment spans residues 319–340; the sequence is VTVIVGLLIHAVIVLPLLYFLV. Residues 341–345 lie on the Cytoplasmic side of the membrane; that stretch reads TRKNP. An intramembrane region (discontinuously helical) is located at residues 346–376; sequence WVFIGGLLQALITALGTSSSSATLPITFKCL. 363–365 is a binding site for L-aspartate; the sequence is SSS. Topologically, residues 377–385 are cytoplasmic; sequence EENNGVDKR. Residues 386–412 traverse the membrane as a helical segment; that stretch reads ITRFVLPVGATINMDGTALYEALAAIF. Residues glycine 394, threonine 396, and asparagine 398 each coordinate Na(+). Residue threonine 402 participates in L-aspartate binding. The Extracellular portion of the chain corresponds to 413–425; that stretch reads IAQVNNFDLNFGQ. Positions 426–459 form an intramembrane region, discontinuously helical; the sequence is IITISITATAASIGAAGIPQAGLVTMVIVLTSVG. 443–447 lines the L-aspartate pocket; the sequence is IPQAG. Residues 460 to 472 lie on the Extracellular side of the membrane; that stretch reads LPTDDITLIIAVD. A helical membrane pass occupies residues 473–494; that stretch reads WFLDRLRTTTNVLGDSLGAGIV. Positions 476 and 483 each coordinate L-aspartate. Positions 483 and 487 each coordinate Na(+). Topologically, residues 495–543 are cytoplasmic; the sequence is EHLSRHELKNRDVEMGNSVIEENEMKKPYQLIAQDNEPEKPVADSETKM. A Phosphoserine modification is found at serine 512. The disordered stretch occupies residues 522–543; sequence PYQLIAQDNEPEKPVADSETKM. The span at 531–543 shows a compositional bias: basic and acidic residues; the sequence is EPEKPVADSETKM.

It belongs to the dicarboxylate/amino acid:cation symporter (DAACS) (TC 2.A.23) family. SLC1A3 subfamily. In terms of assembly, homotrimer. Glycosylated. In terms of tissue distribution, detected in brain, in Bergmann glia arborising into the molecular layer of the cerebellum (at protein level). Localized in brain and is highly enriched in the Purkinje cell layer in cerebellum. Intermediate level in lung, low level in spleen, skeletal muscle and testis.

Its subcellular location is the cell membrane. It carries out the reaction K(+)(in) + L-glutamate(out) + 3 Na(+)(out) + H(+)(out) = K(+)(out) + L-glutamate(in) + 3 Na(+)(in) + H(+)(in). The catalysed reaction is K(+)(in) + L-aspartate(out) + 3 Na(+)(out) + H(+)(out) = K(+)(out) + L-aspartate(in) + 3 Na(+)(in) + H(+)(in). It catalyses the reaction D-aspartate(out) + K(+)(in) + 3 Na(+)(out) + H(+)(out) = D-aspartate(in) + K(+)(out) + 3 Na(+)(in) + H(+)(in). Its function is as follows. Sodium-dependent, high-affinity amino acid transporter that mediates the uptake of L-glutamate and also L-aspartate and D-aspartate. Functions as a symporter that transports one amino acid molecule together with two or three Na(+) ions and one proton, in parallel with the counter-transport of one K(+) ion. Plays a redundant role in the rapid removal of released glutamate from the synaptic cleft, which is essential for terminating the postsynaptic action of glutamate. The sequence is that of Excitatory amino acid transporter 1 (Slc1a3) from Mus musculus (Mouse).